The chain runs to 503 residues: uncharacterized protein (503 aa).

Disordered stretches follow at residues 1–26 (MADD…SPTT) and 132–156 (DQQQ…DNSM). Residues 16 to 26 (AQSSVPTSPTT) are compositionally biased toward low complexity. A compositionally biased stretch (polar residues) spans 147–156 (TPNSVDDNSM).

This is an uncharacterized protein from Caenorhabditis elegans.